The primary structure comprises 455 residues: Tryptophan dimethylallyltransferase (455 aa).

L-tryptophan contacts are provided by residues 79–80 (VL) and E88. Substrate is bound by residues R99, K186, and Y188. L-tryptophan contacts are provided by Y190 and R256. Substrate-binding residues include R269, K271, Y273, Q355, Y357, Y421, and Y425.

This sequence belongs to the tryptophan dimethylallyltransferase family. In terms of assembly, homodimer.

The enzyme catalyses L-tryptophan + dimethylallyl diphosphate = 4-(3-methylbut-2-enyl)-L-tryptophan + diphosphate. The protein operates within alkaloid biosynthesis; ergot alkaloid biosynthesis. Its function is as follows. Tryptophan dimethylallyltransferase; part of the gene cluster that mediates the biosynthesis of fungal ergot alkaloid. DmaW catalyzes the first step of ergot alkaloid biosynthesis by condensing dimethylallyl diphosphate (DMAP) and tryptophan to form 4-dimethylallyl-L-tryptophan. The second step is catalyzed by the methyltransferase easF that methylates 4-dimethylallyl-L-tryptophan in the presence of S-adenosyl-L-methionine, resulting in the formation of 4-dimethylallyl-L-abrine. The catalase easC and the FAD-dependent oxidoreductase easE then transform 4-dimethylallyl-L-abrine to chanoclavine-I which is further oxidized by easD in the presence of NAD(+), resulting in the formation of chanoclavine-I aldehyde. Agroclavine dehydrogenase easG then mediates the conversion of chanoclavine-I aldehyde to agroclavine via a non-enzymatic adduct reaction: the substrate is an iminium intermediate that is formed spontaneously from chanoclavine-I aldehyde in the presence of glutathione. Further conversion of agroclavine to paspalic acid is a two-step process involving oxidation of agroclavine to elymoclavine and of elymoclavine to paspalic acid, the second step being performed by the elymoclavine oxidase cloA. However, cloA does not encode a functional enzyme indicating that C.fusiformis terminates its ergot alkaloid pathway at elymoclavine. The polypeptide is Tryptophan dimethylallyltransferase (Claviceps fusiformis (Ergot fungus)).